The chain runs to 331 residues: Syntaxin-43 (331 aa).

The Cytoplasmic portion of the chain corresponds to 1–305 (MATRNRTLLF…KAERTQRQGG (305 aa)). Disordered stretches follow at residues 20-45 (VRAPMGSSSSSTLTEHNSLTGAKSGL) and 59-80 (PNRSYAPVSTEDPGNSSRGTIT). The segment covering 31 to 40 (TLTEHNSLTG) has biased composition (polar residues). A coiled-coil region spans residues 124–154 (KEDQHQIETLTQEVTFLLKKSEKQLQRLSAA). The t-SNARE coiled-coil homology domain occupies 235 to 297 (EEISIEREKE…DDGLKQLQKA (63 aa)). The helical; Anchor for type IV membrane protein transmembrane segment at 306 to 326 (MVMCASVLVILCFIMLVLLIL) threads the bilayer. Residues 327–331 (KEILL) are Vesicular-facing.

It belongs to the syntaxin family. As to quaternary structure, part of the t-SNARE complex. Expressed at low levels in roots, stems, flowers and leaves.

Its subcellular location is the golgi apparatus. The protein localises to the trans-Golgi network membrane. In terms of biological role, contributes to the regulation of secretory and vacuolar transport pathways in the post-Golgi network, and to the maintenance of the Golgi apparatus and trans-Golgi network (TGN) morphologies. Vesicle trafficking protein that functions in the secretory pathway and mediates liposome fusion. Required for extracellular resistance responses to a fungal pathogen. Also involved in the protection of chloroplasts from salicylic acid-dependent biotic stress. This chain is Syntaxin-43, found in Arabidopsis thaliana (Mouse-ear cress).